Reading from the N-terminus, the 347-residue chain is 3,4-dihydroxy-2-butanone 4-phosphate synthase (347 aa).

A DHBP synthase region spans residues 1 to 200 (MPLNRVREAI…ISDLIEYRMQ (200 aa)). Residues 27 to 28 (RE), aspartate 32, 139 to 143 (RTGHT), and glutamate 163 each bind D-ribulose 5-phosphate. Mg(2+) is bound at residue glutamate 28. Mg(2+) is bound at residue histidine 142. Positions 201-347 (NEMLILIKER…IVLQGGPIQL (147 aa)) are GTP cyclohydrolase II-like.

This sequence in the N-terminal section; belongs to the DHBP synthase family. The protein in the C-terminal section; belongs to the GTP cyclohydrolase II family. The cofactor is Mg(2+). Mn(2+) serves as cofactor.

It carries out the reaction D-ribulose 5-phosphate = (2S)-2-hydroxy-3-oxobutyl phosphate + formate + H(+). The protein operates within cofactor biosynthesis; riboflavin biosynthesis; 2-hydroxy-3-oxobutyl phosphate from D-ribulose 5-phosphate: step 1/1. In terms of biological role, catalyzes the conversion of D-ribulose 5-phosphate to formate and 3,4-dihydroxy-2-butanone 4-phosphate. This Wolinella succinogenes (strain ATCC 29543 / DSM 1740 / CCUG 13145 / JCM 31913 / LMG 7466 / NCTC 11488 / FDC 602W) (Vibrio succinogenes) protein is 3,4-dihydroxy-2-butanone 4-phosphate synthase (ribB).